The primary structure comprises 365 residues: U-box domain-containing protein 56 (365 aa).

Positions 176–281 (YEEQRRRLEI…ELLRALEKGE (106 aa)) form a coiled coil. Residues 293–365 (EPPQCFICPI…AIKDWLQQHP (73 aa)) form the U-box domain.

It catalyses the reaction S-ubiquitinyl-[E2 ubiquitin-conjugating enzyme]-L-cysteine + [acceptor protein]-L-lysine = [E2 ubiquitin-conjugating enzyme]-L-cysteine + N(6)-ubiquitinyl-[acceptor protein]-L-lysine.. Its pathway is protein modification; protein ubiquitination. Functionally, functions as an E3 ubiquitin ligase. The protein is U-box domain-containing protein 56 (PUB56) of Arabidopsis thaliana (Mouse-ear cress).